The following is a 162-amino-acid chain: Peptide deformylase (162 aa).

Fe cation-binding residues include cysteine 86 and histidine 128. Glutamate 129 is an active-site residue. Residue histidine 132 coordinates Fe cation.

It belongs to the polypeptide deformylase family. It depends on Fe(2+) as a cofactor.

The catalysed reaction is N-terminal N-formyl-L-methionyl-[peptide] + H2O = N-terminal L-methionyl-[peptide] + formate. In terms of biological role, removes the formyl group from the N-terminal Met of newly synthesized proteins. Requires at least a dipeptide for an efficient rate of reaction. N-terminal L-methionine is a prerequisite for activity but the enzyme has broad specificity at other positions. The sequence is that of Peptide deformylase from Treponema pallidum (strain Nichols).